Here is a 290-residue protein sequence, read N- to C-terminus: Porphobilinogen deaminase (290 aa).

C237 carries the S-(dipyrrolylmethanemethyl)cysteine modification.

The protein belongs to the HMBS family. As to quaternary structure, monomer. It depends on dipyrromethane as a cofactor.

The catalysed reaction is 4 porphobilinogen + H2O = hydroxymethylbilane + 4 NH4(+). Its pathway is porphyrin-containing compound metabolism; protoporphyrin-IX biosynthesis; coproporphyrinogen-III from 5-aminolevulinate: step 2/4. Tetrapolymerization of the monopyrrole PBG into the hydroxymethylbilane pre-uroporphyrinogen in several discrete steps. This Clostridium botulinum (strain Langeland / NCTC 10281 / Type F) protein is Porphobilinogen deaminase.